Here is a 263-residue protein sequence, read N- to C-terminus: UPF0328 protein ECU08_2060 (263 aa).

Belongs to the UPF0328 family.

The polypeptide is UPF0328 protein ECU08_2060 (Encephalitozoon cuniculi (strain GB-M1) (Microsporidian parasite)).